The primary structure comprises 356 residues: Dihydroorotate dehydrogenase (quinone) (356 aa).

Residues 66–70 and Thr-90 contribute to the FMN site; that span reads AGFDK. Lys-70 contributes to the substrate binding site. Position 115–119 (115–119) interacts with substrate; that stretch reads NRMGF. Asn-143 and Asn-176 together coordinate FMN. Residue Asn-176 coordinates substrate. Ser-179 serves as the catalytic Nucleophile. Residue Asn-181 coordinates substrate. Residues Lys-212 and Thr-240 each coordinate FMN. 241 to 242 contacts substrate; that stretch reads NT. FMN-binding positions include Gly-266, Gly-295, and 316–317; that span reads YT.

Belongs to the dihydroorotate dehydrogenase family. Type 2 subfamily. In terms of assembly, monomer. Requires FMN as cofactor.

The protein localises to the cell membrane. It catalyses the reaction (S)-dihydroorotate + a quinone = orotate + a quinol. Its pathway is pyrimidine metabolism; UMP biosynthesis via de novo pathway; orotate from (S)-dihydroorotate (quinone route): step 1/1. In terms of biological role, catalyzes the conversion of dihydroorotate to orotate with quinone as electron acceptor. This is Dihydroorotate dehydrogenase (quinone) from Rhodococcus opacus (strain B4).